Here is a 122-residue protein sequence, read N- to C-terminus: Large ribosomal subunit protein uL14 (122 aa).

Belongs to the universal ribosomal protein uL14 family. In terms of assembly, part of the 50S ribosomal subunit. Forms a cluster with proteins L3 and L19. In the 70S ribosome, L14 and L19 interact and together make contacts with the 16S rRNA in bridges B5 and B8.

In terms of biological role, binds to 23S rRNA. Forms part of two intersubunit bridges in the 70S ribosome. This is Large ribosomal subunit protein uL14 from Allorhizobium ampelinum (strain ATCC BAA-846 / DSM 112012 / S4) (Agrobacterium vitis (strain S4)).